We begin with the raw amino-acid sequence, 375 residues long: Ferredoxin--NADP reductase, root-type isozyme, chloroplastic (375 aa).

Residues 1–60 constitute a chloroplast transit peptide; the sequence is MAHSALSQVSVAVPLQTDSSFRRSTFKATSITFSDRSSWISMPPIDLKAAPSRNQHIVCM. The region spanning 91 to 219 is the FAD-binding FR-type domain; sequence KEPYTATIVS…TGPSGKIMLL (129 aa). Residues 151-154, 172-174, Tyr-178, 193-195, and Thr-235 contribute to the FAD site; these read RLYL, CVR, and VCS. Position 174 (Arg-174) interacts with NADP(+). NADP(+) contacts are provided by residues Thr-235, 266–267, 296–297, Lys-306, 334–335, and Glu-373; these read VA, SR, and GL.

This sequence belongs to the ferredoxin--NADP reductase type 1 family. It depends on FAD as a cofactor.

It localises to the plastid. The protein resides in the chloroplast. The enzyme catalyses 2 reduced [2Fe-2S]-[ferredoxin] + NADP(+) + H(+) = 2 oxidized [2Fe-2S]-[ferredoxin] + NADPH. It functions in the pathway energy metabolism; photosynthesis. May play a key role in regulating the relative amounts of cyclic and non-cyclic electron flow to meet the demands of the plant for ATP and reducing power. Is involved in nitrate assimilation. The polypeptide is Ferredoxin--NADP reductase, root-type isozyme, chloroplastic (Nicotiana tabacum (Common tobacco)).